The sequence spans 189 residues: MTPERVPSVVFKTRVRDESVPGPNPYRWEDKTTEQIFGGKKVVLFSLPGAFTPTCSSNHLPRYEQLFEEFQALGVDDIICLSVNDAFVMFQWGKQIGADKVKLLPDGNGEFTRKMGMLVEKSNLGFGMRSWRYSMFVNDGKIEKMFIEPEFGDNCPVDPFECSDADTMLAYLKGAEAPGVSEPVKAFVG.

Residues 2 to 177 (TPERVPSVVF…MLAYLKGAEA (176 aa)) enclose the Thioredoxin domain. Catalysis depends on C55, which acts as the Cysteine sulfenic acid (-SOH) intermediate (for peroxiredoxin activity).

It belongs to the peroxiredoxin family. Prx5 subfamily. Monomer.

It carries out the reaction a hydroperoxide + 2 glutathione = an alcohol + glutathione disulfide + H2O. Its function is as follows. Thiol-specific peroxidase that catalyzes the reduction of hydrogen peroxide and organic hydroperoxides to water and alcohols, respectively. Plays a role in cell protection against oxidative stress by detoxifying peroxides. In Synechocystis sp. (strain ATCC 27184 / PCC 6803 / Kazusa), this protein is Peroxiredoxin sll1621.